Here is a 256-residue protein sequence, read N- to C-terminus: Imidazole glycerol phosphate synthase subunit HisF (256 aa).

Active-site residues include D12 and D131.

Belongs to the HisA/HisF family. In terms of assembly, heterodimer of HisH and HisF.

It localises to the cytoplasm. It carries out the reaction 5-[(5-phospho-1-deoxy-D-ribulos-1-ylimino)methylamino]-1-(5-phospho-beta-D-ribosyl)imidazole-4-carboxamide + L-glutamine = D-erythro-1-(imidazol-4-yl)glycerol 3-phosphate + 5-amino-1-(5-phospho-beta-D-ribosyl)imidazole-4-carboxamide + L-glutamate + H(+). It functions in the pathway amino-acid biosynthesis; L-histidine biosynthesis; L-histidine from 5-phospho-alpha-D-ribose 1-diphosphate: step 5/9. Its function is as follows. IGPS catalyzes the conversion of PRFAR and glutamine to IGP, AICAR and glutamate. The HisF subunit catalyzes the cyclization activity that produces IGP and AICAR from PRFAR using the ammonia provided by the HisH subunit. This chain is Imidazole glycerol phosphate synthase subunit HisF, found in Bifidobacterium adolescentis (strain ATCC 15703 / DSM 20083 / NCTC 11814 / E194a).